Reading from the N-terminus, the 255-residue chain is Imidazole glycerol phosphate synthase subunit HisF (255 aa).

Catalysis depends on residues Asp11 and Asp130.

Belongs to the HisA/HisF family. Heterodimer of HisH and HisF.

The protein localises to the cytoplasm. The catalysed reaction is 5-[(5-phospho-1-deoxy-D-ribulos-1-ylimino)methylamino]-1-(5-phospho-beta-D-ribosyl)imidazole-4-carboxamide + L-glutamine = D-erythro-1-(imidazol-4-yl)glycerol 3-phosphate + 5-amino-1-(5-phospho-beta-D-ribosyl)imidazole-4-carboxamide + L-glutamate + H(+). Its pathway is amino-acid biosynthesis; L-histidine biosynthesis; L-histidine from 5-phospho-alpha-D-ribose 1-diphosphate: step 5/9. In terms of biological role, IGPS catalyzes the conversion of PRFAR and glutamine to IGP, AICAR and glutamate. The HisF subunit catalyzes the cyclization activity that produces IGP and AICAR from PRFAR using the ammonia provided by the HisH subunit. The sequence is that of Imidazole glycerol phosphate synthase subunit HisF from Campylobacter jejuni (strain RM1221).